Consider the following 466-residue polypeptide: Vimentin (466 aa).

Low complexity-rich tracts occupy residues 1 to 13 (MSTR…SYRR) and 20 to 33 (TSSR…YVTT). The tract at residues 1-33 (MSTRSVSSSSYRRMFGGSGTSSRPSSNRSYVTT) is disordered. N-acetylserine is present on Ser2. Residues 2-95 (STRSVSSSSY…FSLADAINTE (94 aa)) are head. Phosphoserine is present on Ser5. Ser7 carries the phosphoserine; by PKA and PKC; alternate modification. Ser7 is a glycosylation site (O-linked (GlcNAc) serine; alternate). Phosphoserine is present on Ser8. 2 positions are modified to phosphoserine; by PKC: Ser9 and Ser10. Phosphothreonine is present on Thr20. A Phosphoserine; by PKC modification is found at Ser21. A Phosphoserine; by PKA and PKC modification is found at Ser25. Ser26 is modified (phosphoserine; by PKC). Thr33 carries O-linked (GlcNAc) threonine glycosylation. O-linked (GlcNAc) serine; alternate glycosylation occurs at Ser34. The residue at position 34 (Ser34) is a Phosphoserine; by PKC; alternate. Position 39 is a phosphoserine; by CaMK2, PKA, PKC and ROCK2 (Ser39). At Ser42 the chain carries Phosphoserine; by PKC. Phosphoserine; by PKA is present on Ser47. Ser49 carries the phosphoserine modification. Ser51 bears the Phosphoserine; by PKA and PKC mark. At Tyr53 the chain carries Phosphotyrosine. Phosphoserine is present on residues Ser55 and Ser56. Tyr61 carries the phosphotyrosine modification. Ser66 is subject to Phosphoserine; by PKA and PKC. Ser72 bears the Phosphoserine; by AURKB and ROCK2 mark. Ser73 is subject to Phosphoserine. Residue Ser83 is modified to Phosphoserine; by CaMK2. Ser87 carries the post-translational modification Phosphoserine. The tract at residues 96–131 (FKNTRTNEKVELQELNDRFANYIDKVRFLEQQNKIL) is coil 1A. Residues 96 to 131 (FKNTRTNEKVELQELNDRFANYIDKVRFLEQQNKIL) adopt a coiled-coil conformation. Positions 103–411 (EKVELQELND…KLLEGEESRI (309 aa)) constitute an IF rod domain. Lys104 is covalently cross-linked (Glycyl lysine isopeptide (Lys-Gly) (interchain with G-Cter in SUMO2)). Tyr117 carries the post-translational modification Phosphotyrosine. An N6-acetyllysine; alternate mark is found at Lys120, Lys129, and Lys139. Lys120 and Lys129 each carry N6-succinyllysine; alternate. Glycyl lysine isopeptide (Lys-Gly) (interchain with G-Cter in SUMO2); alternate cross-links involve residues Lys120, Lys129, and Lys139. Residues 132–153 (LAELEQLKGQGKSRLGDLYEEE) are linker 1. Ser144 carries the phosphoserine modification. The stretch at 154–245 (MRELRRQVDQ…KLHDEEIQEL (92 aa)) forms a coiled coil. The tract at residues 154-245 (MRELRRQVDQ…KLHDEEIQEL (92 aa)) is coil 1B. The residue at position 168 (Lys168) is an N6-acetyllysine. Lys188 is modified (N6-acetyllysine; alternate). N6-succinyllysine; alternate is present on Lys188. Ser214 carries the post-translational modification Phosphoserine. Residue Lys223 is modified to N6-acetyllysine; alternate. A Glycyl lysine isopeptide (Lys-Gly) (interchain with G-Cter in SUMO2); alternate cross-link involves residue Lys223. Ser226 bears the Phosphoserine mark. Residue Lys235 is modified to N6-acetyllysine. A linker 12 region spans residues 246–268 (QAQIQEQHVQIDVDVSKPDLTAA). Lys262 participates in a covalent cross-link: Glycyl lysine isopeptide (Lys-Gly) (interchain with G-Cter in SUMO2). The coil 2 stretch occupies residues 269-407 (LRDVRQQYES…ATYRKLLEGE (139 aa)). The residue at position 294 (Lys294) is an N6-acetyllysine; alternate. Position 294 is an N6-succinyllysine; alternate (Lys294). A Glycyl lysine isopeptide (Lys-Gly) (interchain with G-Cter in SUMO2); alternate cross-link involves residue Lys294. A Phosphoserine modification is found at Ser299. Positions 303–407 (NRNNDALRQA…ATYRKLLEGE (105 aa)) form a coiled coil. Residue Lys313 forms a Glycyl lysine isopeptide (Lys-Gly) (interchain with G-Cter in SUMO2) linkage. A Phosphoserine modification is found at Ser325. A [IL]-x-C-x-x-[DE] motif motif is present at residues 326–329 (LTCE). Residue Lys373 is modified to N6-acetyllysine; alternate. Lys373 participates in a covalent cross-link: Glycyl lysine isopeptide (Lys-Gly) (interchain with G-Cter in SUMO2); alternate. Residues 408 to 466 (ESRISLPLPTFSSLNLRETNLESLPLVDTHSKRTLLIKTVETRDGQVINETSQHHDDLE) form a tail region. Phosphoserine occurs at positions 409, 412, 419, and 420. Thr426 carries the phosphothreonine modification. Ser430 carries the phosphoserine modification. A Phosphothreonine modification is found at Thr436. Ser438 carries the phosphoserine modification. A Glycyl lysine isopeptide (Lys-Gly) (interchain with G-Cter in SUMO2) cross-link involves residue Lys439. Lys445 bears the N6-acetyllysine; alternate mark. Position 445 is an N6-succinyllysine; alternate (Lys445). Residue Lys445 forms a Glycyl lysine isopeptide (Lys-Gly) (interchain with G-Cter in SUMO2); alternate linkage. Lys445 is covalently cross-linked (Glycyl lysine isopeptide (Lys-Gly) (interchain with G-Cter in SUMO1); alternate). Phosphothreonine occurs at positions 446 and 458. Ser459 carries the phosphoserine modification.

This sequence belongs to the intermediate filament family. Homomer assembled from elementary dimers. Identified in complexes that contain VIM, EZR, AHNAK, BFSP1, BFSP2, ANK2, PLEC, PRX and spectrin. Interacts with BCAS3. Interacts with LGSN. Interacts with SYNM. Interacts (via rod region) with PLEC (via CH 1 domain). Interacts with PLEC isoform 1C. Interacts with STK33. Interacts with LARP6. Interacts with RAB8B. Interacts with TOR1A; the interaction associates TOR1A with the cytoskeleton. Interacts with TOR1AIP1. Interacts with DIAPH1. Interacts with EPPK1; interaction is dependent of higher-order structure of intermediate filament. Interacts with the non-receptor tyrosine kinase SRMS; the interaction leads to phosphorylation of VIM. Interacts with NOD2. Interacts (via head region) with CORO1C. Interacts with HDGF. Interacts with PRKCE (via phorbol-ester/DAG-type 2 domain). Interacts with BFSP2. Interacts with PPL. Interacts with PKP1 and PKP2. Interacts with SCRIB (via PDZ domains); the interaction protects SCRIB from proteasomal degradation and facilitates SCRIB localization to intermediate filaments, the interaction is reduced by cell contact inhibition. In terms of processing, phosphorylation by PKN1 inhibits the formation of filaments. Filament disassembly during mitosis is promoted by phosphorylation at Ser-55 as well as by nestin. One of the most prominent phosphoproteins in various cells of mesenchymal origin. Phosphorylation is enhanced during cell division, at which time vimentin filaments are significantly reorganized. Phosphorylated at Ser-56 by CDK5 during neutrophil secretion in the cytoplasm. Phosphorylated by STK33. Phosphorylated on tyrosine residues by SRMS. Post-translationally, S-nitrosylation is induced by interferon-gamma and oxidatively-modified low-densitity lipoprotein (LDL(ox)) possibly implicating the iNOS-S100A8/9 transnitrosylase complex. Detected in eye lens fiber cells (at protein level). Expressed in retinal lens epithelial cells (at protein level). Expressed in Langerhans cells in the epidermis (at protein level).

The protein resides in the cytoplasm. The protein localises to the cytoskeleton. Its subcellular location is the nucleus matrix. It localises to the cell membrane. Its function is as follows. Vimentins are class-III intermediate filaments found in various non-epithelial cells, especially mesenchymal cells. Vimentin is attached to the nucleus, endoplasmic reticulum, and mitochondria, either laterally or terminally. Plays a role in cell directional movement, orientation, cell sheet organization and Golgi complex polarization at the cell migration front. Protects SCRIB from proteasomal degradation and facilitates its localization to intermediate filaments in a cell contact-mediated manner. Functionally, involved with LARP6 in the stabilization of type I collagen mRNAs for CO1A1 and CO1A2. In Mus musculus (Mouse), this protein is Vimentin.